An 84-amino-acid chain; its full sequence is UPF0153 protein YeiW (84 aa).

This sequence belongs to the UPF0153 family.

This chain is UPF0153 protein YeiW (yeiW), found in Escherichia coli (strain K12).